Here is a 243-residue protein sequence, read N- to C-terminus: tRNA (guanine-N(1)-)-methyltransferase (243 aa).

S-adenosyl-L-methionine contacts are provided by residues G108 and 127-132; that span reads LGDFVL.

The protein belongs to the RNA methyltransferase TrmD family. As to quaternary structure, homodimer.

It is found in the cytoplasm. It carries out the reaction guanosine(37) in tRNA + S-adenosyl-L-methionine = N(1)-methylguanosine(37) in tRNA + S-adenosyl-L-homocysteine + H(+). Functionally, specifically methylates guanosine-37 in various tRNAs. This Streptococcus pyogenes serotype M5 (strain Manfredo) protein is tRNA (guanine-N(1)-)-methyltransferase.